We begin with the raw amino-acid sequence, 149 residues long: Calmodulin (149 aa).

Alanine 2 bears the N-acetylalanine mark. EF-hand domains are found at residues glutamate 8–asparagine 43, proline 44–aspartate 79, aspartate 81–lysine 116, and leucine 117–lysine 149. Residues aspartate 21, aspartate 23, aspartate 25, threonine 27, glutamate 32, aspartate 57, aspartate 59, asparagine 61, threonine 63, glutamate 68, aspartate 94, aspartate 96, asparagine 98, and glutamate 105 each contribute to the Ca(2+) site. Lysine 116 is modified (N6,N6,N6-trimethyllysine). 5 residues coordinate Ca(2+): aspartate 130, aspartate 132, aspartate 134, glutamine 136, and glutamate 141.

This sequence belongs to the calmodulin family.

In terms of biological role, calmodulin mediates the control of a large number of enzymes, ion channels and other proteins by Ca(2+). Among the enzymes to be stimulated by the calmodulin-Ca(2+) complex are a number of protein kinases and phosphatases. The polypeptide is Calmodulin (Lumbricus rubellus (Humus earthworm)).